A 98-amino-acid polypeptide reads, in one-letter code: Cell cycle protein GpsB (98 aa).

The stretch at 34 to 72 (LDMVIKDYEAFHQEIEELQQENLQLKKQLEEANKRQPAQ) forms a coiled coil.

This sequence belongs to the GpsB family. As to quaternary structure, forms polymers through the coiled coil domains. Interacts with PBP1, MreC and EzrA.

The protein resides in the cytoplasm. Functionally, divisome component that associates with the complex late in its assembly, after the Z-ring is formed, and is dependent on DivIC and PBP2B for its recruitment to the divisome. Together with EzrA, is a key component of the system that regulates PBP1 localization during cell cycle progression. Its main role could be the removal of PBP1 from the cell pole after pole maturation is completed. Also contributes to the recruitment of PBP1 to the division complex. Not essential for septum formation. The chain is Cell cycle protein GpsB from Bacillus licheniformis (strain ATCC 14580 / DSM 13 / JCM 2505 / CCUG 7422 / NBRC 12200 / NCIMB 9375 / NCTC 10341 / NRRL NRS-1264 / Gibson 46).